The sequence spans 1152 residues: Receptor-type guanylate cyclase gcy-8 (1152 aa).

An N-terminal signal peptide occupies residues 1–21; sequence MRTKKAFLLLTFNVLIYLAAC. Topologically, residues 22 to 506 are extracellular; it reads QETERILANN…GYRNERCDYT (485 aa). Residues Asn31, Asn55, Asn385, and Asn465 are each glycosylated (N-linked (GlcNAc...) asparagine). Residues 507–527 form a helical membrane-spanning segment; the sequence is LIIIGAALILLFIVAAVSAFF. Residues 528-1152 are Cytoplasmic-facing; that stretch reads AQKILEKRAL…NLKNPTGLQR (625 aa). The Protein kinase domain occupies 567-857; the sequence is RTKMSNMNYG…RIKLNVETYL (291 aa). ATP is bound by residues 573–581 and Lys593; that span reads MNYGSRNHA. The stretch at 861 to 899 forms a coiled coil; it reads GSLVDQMTRMMEQYANNLEKLVAERTGMLEEANQRADRL. One can recognise a Guanylate cyclase domain in the interval 927 to 1057; sequence TVLFSDIVGF…DTVNMASRME (131 aa). Mg(2+)-binding residues include Asp932, Ile933, and Asp976.

Belongs to the adenylyl cyclase class-4/guanylyl cyclase family. As to expression, expressed bilaterally in AFD sensory neurons.

Its subcellular location is the cell membrane. The protein localises to the cell projection. It localises to the cilium. It carries out the reaction GTP = 3',5'-cyclic GMP + diphosphate. Its activity is regulated as follows. Inhibited by chloride with an IC(50) of 60 mM. Functionally, guanylate cyclase involved in the production of the second messenger cGMP. Regulates thermotaxis responses in AFD sensory neurons. May regulate AFD neuronal activity such as calcium responses to temperature gradients. Maintains the microvilli receptive ending morphology of the AFD thermosensory neurons by regulating cGMP levels downstream of kcc-3. cGMP levels antagonize the actin cytoskeleton regulator wsp-1. In Caenorhabditis elegans, this protein is Receptor-type guanylate cyclase gcy-8.